The primary structure comprises 844 residues: Bifunctional abietadiene synthase, chloroplastic (844 aa).

The N-terminal 46 residues, 1–46 (QSIPHFSTTLNAGSSARKRRSLYLRWGKGSNKIIACVGEGATSVPY), are a transit peptide targeting the chloroplast. Lysine 245 is a binding site for substrate. Mg(2+) is bound by residues aspartate 378 and aspartate 380. Positions 378-381 (DIDD) match the DXDD motif motif. Residue lysine 465 coordinates substrate. Positions 597, 601, 741, 745, and 749 each coordinate Mg(2+). The DDXXD motif signature appears at 597–601 (DDLYD).

It belongs to the terpene synthase family. Tpsd subfamily. As to quaternary structure, monomer. Mg(2+) serves as cofactor.

The protein localises to the plastid. It localises to the chloroplast. The enzyme catalyses (2E,6E,10E)-geranylgeranyl diphosphate = (+)-copalyl diphosphate. It catalyses the reaction (+)-copalyl diphosphate = abieta-7,13-diene + diphosphate. The catalysed reaction is (+)-copalyl diphosphate = neoabietadiene + diphosphate. It carries out the reaction (+)-copalyl diphosphate = abieta-8(14),12-diene + diphosphate. Its pathway is terpene metabolism; oleoresin biosynthesis. Involved in defensive oleoresin formation in conifers in response to insect attack or other injury. Involved in diterpene (C20) olefins biosynthesis. Bifunctional enzyme that catalyzes two sequential cyclizations of geranylgeranyl diphosphate (GGPP) to abietadiene. The copalyl diphosphate (CPP) intermediate diffuses freely between the 2 active sites in the enzyme. This Abies balsamea (Balsam fir) protein is Bifunctional abietadiene synthase, chloroplastic (LAS).